The chain runs to 102 residues: U3-aranetoxin-Ce1a (102 aa).

Residues methionine 1–alanine 21 form the signal peptide.

It belongs to the neurotoxin 20 family. As to expression, expressed by the venom gland.

It localises to the secreted. The polypeptide is U3-aranetoxin-Ce1a (Caerostris extrusa (Bark spider)).